Consider the following 139-residue polypeptide: Dehydrin DHN1 (139 aa).

The tract at residues 1-139 (MEYQGQHGHA…IKEKLPGGQH (139 aa)) is disordered. A compositionally biased stretch (gly residues) spans 23 to 42 (GHGGFTGGPTGTHGAAGVGG). Residues 49-58 (RDGHKTDGVL) show a composition bias toward basic and acidic residues. Low complexity predominate over residues 59-68 (RRSGSSSSSS). Over residues 83 to 98 (KEKIKEKLPGGAHKDA) the composition is skewed to basic and acidic residues. Positions 99–109 (AGQQQQTAMAG) are enriched in low complexity. Positions 120–139 (TGEKKGVMDKIKEKLPGGQH) are enriched in basic and acidic residues.

It belongs to the plant dehydrin family.

This chain is Dehydrin DHN1 (DHN1), found in Hordeum vulgare (Barley).